The chain runs to 501 residues: ATP-dependent rRNA helicase RRP3 (501 aa).

A coiled-coil region spans residues lysine 3 to glutamate 44. The interval glutamate 36 to serine 79 is disordered. Phosphoserine occurs at positions 43, 45, and 47. The Q motif motif lies at glutamate 81–serine 109. The region spanning isoleucine 112–cysteine 284 is the Helicase ATP-binding domain. Alanine 125–threonine 132 is an ATP binding site. The DEAD box signature appears at aspartate 231 to aspartate 234. The region spanning leucine 307 to valine 461 is the Helicase C-terminal domain. The tract at residues isoleucine 480–arginine 501 is disordered. A compositionally biased stretch (basic and acidic residues) spans methionine 491–arginine 501.

It belongs to the DEAD box helicase family. DDX47/RRP3 subfamily. Interacts with the SSU processome.

It localises to the nucleus. The catalysed reaction is ATP + H2O = ADP + phosphate + H(+). With respect to regulation, ATPase activity is stimulated upon the addition of RNA. Functionally, ATP-dependent rRNA helicase required for pre-ribosomal RNA processing. Involved in the maturation of the 35S-pre-rRNA and to its cleavage to mature 18S rRNA. The sequence is that of ATP-dependent rRNA helicase RRP3 from Saccharomyces cerevisiae (strain ATCC 204508 / S288c) (Baker's yeast).